Consider the following 208-residue polypeptide: Thymidylate kinase (208 aa).

Residue 10 to 17 participates in ATP binding; sequence GLEGAGKS.

The protein belongs to the thymidylate kinase family.

The catalysed reaction is dTMP + ATP = dTDP + ADP. Functionally, phosphorylation of dTMP to form dTDP in both de novo and salvage pathways of dTTP synthesis. The chain is Thymidylate kinase from Pseudoalteromonas translucida (strain TAC 125).